The following is a 123-amino-acid chain: Small ribosomal subunit protein eS8 (123 aa).

Positions Met-1 to Gly-37 are disordered. The span at Ser-7–Gln-26 shows a compositional bias: basic residues.

This sequence belongs to the eukaryotic ribosomal protein eS8 family. Part of the 30S ribosomal subunit.

This chain is Small ribosomal subunit protein eS8, found in Halorubrum lacusprofundi (strain ATCC 49239 / DSM 5036 / JCM 8891 / ACAM 34).